Here is a 3083-residue protein sequence, read N- to C-terminus: Laminin subunit alpha-1 (3083 aa).

The N-terminal stretch at 1 to 24 (MRGSGTGAALLVLLASVLWVTVRS) is a signal peptide. Gln-25 carries the pyrrolidone carboxylic acid modification. Positions 25–276 (QQRGLFPAIL…SIKDISVGGM (252 aa)) constitute a Laminin N-terminal domain. 6 disulfides stabilise this stretch: Cys-277–Cys-286, Cys-279–Cys-297, Cys-299–Cys-308, Cys-311–Cys-331, Cys-334–Cys-343, and Cys-336–Cys-368. 4 Laminin EGF-like domains span residues 277-333 (CICY…ECEE), 334-403 (CNCH…PCRP), 404-460 (CNCD…NCIP), and 461-509 (CDCR…GCSE). Asn-370 is a glycosylation site (N-linked (GlcNAc...) asparagine). Intrachain disulfides connect Cys-371–Cys-380, Cys-383–Cys-401, Cys-404–Cys-416, Cys-406–Cys-434, Cys-436–Cys-445, Cys-448–Cys-458, Cys-461–Cys-474, Cys-463–Cys-478, Cys-480–Cys-489, and Cys-492–Cys-507. In terms of domain architecture, Laminin EGF-like 5; first part spans 510–519 (CFCFGVSGVC). A Laminin IV type A 1 domain is found at 523-715 (TWSISQVTNM…DLAVAADVEH (193 aa)). Residue Asn-672 is glycosylated (N-linked (GlcNAc...) asparagine). A Laminin EGF-like 5; second part domain is found at 716-748 (CECPQGYTGTSCEACLPGYYRVDGILFGGICQP). 32 disulfides stabilise this stretch: Cys-749–Cys-758, Cys-751–Cys-764, Cys-767–Cys-776, Cys-779–Cys-795, Cys-798–Cys-813, Cys-800–Cys-823, Cys-826–Cys-835, Cys-838–Cys-853, Cys-856–Cys-870, Cys-858–Cys-877, Cys-880–Cys-889, Cys-892–Cys-906, Cys-909–Cys-921, Cys-911–Cys-928, Cys-930–Cys-939, Cys-942–Cys-955, Cys-958–Cys-970, Cys-960–Cys-976, Cys-978–Cys-987, Cys-990–Cys-1002, Cys-1005–Cys-1014, Cys-1007–Cys-1021, Cys-1023–Cys-1032, Cys-1035–Cys-1048, Cys-1051–Cys-1063, Cys-1053–Cys-1070, Cys-1072–Cys-1081, Cys-1084–Cys-1094, Cys-1097–Cys-1109, Cys-1099–Cys-1125, Cys-1127–Cys-1136, and Cys-1139–Cys-1154. 8 consecutive Laminin EGF-like domains span residues 749-797 (CECH…DCQP), 798-855 (CACP…TCVP), 856-908 (CNCS…NCRA), 909-957 (CDCH…GCVP), 958-1004 (CNCS…GCTP), 1005-1050 (CDCA…GCQA), 1051-1096 (CNCS…DCVP), and 1097-1156 (CGCD…GCSP). A Cell attachment site motif is present at residues 1147–1149 (RGD). A Laminin EGF-like 14; first part domain is found at 1157-1166 (CFCFGLSQLC). A Laminin IV type A 2 domain is found at 1177–1368 (ITLASDQPLL…EGEAALLLEL (192 aa)). A glycan (N-linked (GlcNAc...) asparagine) is linked at Asn-1344. The Laminin EGF-like 14; second part domain occupies 1369–1409 (CVCPPGTAGHSCQDCAPGYYREKLPESGGRGPRPLLAPCVP). 12 cysteine pairs are disulfide-bonded: Cys-1410-Cys-1419, Cys-1412-Cys-1426, Cys-1429-Cys-1438, Cys-1441-Cys-1456, Cys-1459-Cys-1473, Cys-1461-Cys-1483, Cys-1486-Cys-1495, Cys-1498-Cys-1513, Cys-1516-Cys-1528, Cys-1518-Cys-1535, Cys-1537-Cys-1546, and Cys-1549-Cys-1560. Laminin EGF-like domains lie at 1410–1458 (CNCN…DCTP), 1459–1515 (CTCP…SCQT), and 1516–1562 (CDCN…DCVS). The interval 1564 to 2123 (DDDCVGPLLN…SRARKQVASI (560 aa)) is domain II and I. Residues 1617-1691 (AKKIRAEIQL…VATLNQTARK (75 aa)) adopt a coiled-coil conformation. Residues Asn-1659, Asn-1686, Asn-1718, Asn-1725, Asn-1763, and Asn-1811 are each glycosylated (N-linked (GlcNAc...) asparagine). Positions 1723–1809 (QQNATLELKA…QEKKLRVQEE (87 aa)) form a coiled coil. The stretch at 1868–1901 (KRRARDLVHRAEQHASELQSRAGALDRDLENVRN) forms a coiled coil. Residues Asn-1935, Asn-2026, Asn-2045, and Asn-2066 are each glycosylated (N-linked (GlcNAc...) asparagine). 5 consecutive Laminin G-like domains span residues 2124–2304 (KVAV…CNGC), 2312–2488 (DSSF…RKGC), 2493–2679 (IQSV…LDTC), 2721–2893 (AHQF…VDRC), and 2898–3078 (QEGT…PHSC). Cys-2278 and Cys-2304 are disulfide-bonded. Asn-2355 carries N-linked (GlcNAc...) asparagine glycosylation. Cystine bridges form between Cys-2464/Cys-2488 and Cys-2652/Cys-2679. Asn-2834 is a glycosylation site (N-linked (GlcNAc...) asparagine). Cys-2868 and Cys-2893 are disulfide-bonded. N-linked (GlcNAc...) asparagine glycosylation occurs at Asn-2923. Residues Cys-3047 and Cys-3078 are joined by a disulfide bond.

Laminin is a complex glycoprotein, consisting of three different polypeptide chains (alpha, beta, gamma), which are bound to each other by disulfide bonds into a cross-shaped molecule comprising one long and three short arms with globules at each end. Alpha-1 is a subunit of laminin-1 (laminin-111 or EHS laminin) and laminin-3 (laminin-121 or S-laminin). Post-translationally, tyrosine phosphorylated by PKDCC/VLK.

It is found in the secreted. The protein localises to the extracellular space. Its subcellular location is the extracellular matrix. The protein resides in the basement membrane. Functionally, binding to cells via a high affinity receptor, laminin is thought to mediate the attachment, migration and organization of cells into tissues during embryonic development by interacting with other extracellular matrix components. This chain is Laminin subunit alpha-1 (Lama1), found in Mus musculus (Mouse).